Here is a 451-residue protein sequence, read N- to C-terminus: Hexokinase (451 aa).

The Hexokinase domain occupies 6-445 (QQLFEKVVEI…SGKGAAAIAA (440 aa)). The interval 63-195 (NGTETGNFLA…ELNVKCVAVV (133 aa)) is hexokinase small subdomain. 74 to 79 (DLGGTN) serves as a coordination point for ATP. Substrate is bound by residues Ser144, 161-162 (TK), 196-197 (ND), 222-223 (TN), Glu249, and Glu283. The interval 196–434 (NDTVGTLASC…TRFCLRLSED (239 aa)) is hexokinase large subdomain. Residues 288-289 (GM), 325-329 (TRYLT), and 401-405 (SLYKF) contribute to the ATP site.

Belongs to the hexokinase family. Monomer.

It catalyses the reaction a D-hexose + ATP = a D-hexose 6-phosphate + ADP + H(+). The catalysed reaction is D-mannose + ATP = D-mannose 6-phosphate + ADP + H(+). The enzyme catalyses D-fructose + ATP = D-fructose 6-phosphate + ADP + H(+). It carries out the reaction D-glucose + ATP = D-glucose 6-phosphate + ADP + H(+). Its pathway is carbohydrate metabolism; hexose metabolism. It participates in carbohydrate degradation; glycolysis; D-glyceraldehyde 3-phosphate and glycerone phosphate from D-glucose: step 1/4. Its function is as follows. Catalyzes the phosphorylation of various hexoses to hexose 6-phosphate. This chain is Hexokinase, found in Schistosoma mansoni (Blood fluke).